A 420-amino-acid polypeptide reads, in one-letter code: Pyridinium-3,5-bisthiocarboxylic acid mononucleotide nickel insertion protein (420 aa).

The disordered stretch occupies residues 81–104 (NHEHKHNHHEIKNDEPAHSHEHHH). Residues 90-99 (EIKNDEPAHS) are compositionally biased toward basic and acidic residues.

The protein belongs to the LarC family.

It carries out the reaction Ni(II)-pyridinium-3,5-bisthiocarboxylate mononucleotide = pyridinium-3,5-bisthiocarboxylate mononucleotide + Ni(2+). Functionally, involved in the biosynthesis of a nickel-pincer cofactor ((SCS)Ni(II) pincer complex). Binds Ni(2+), and functions in nickel delivery to pyridinium-3,5-bisthiocarboxylic acid mononucleotide (P2TMN), to form the mature cofactor. Is thus probably required for the activation of nickel-pincer cofactor-dependent enzymes. The protein is Pyridinium-3,5-bisthiocarboxylic acid mononucleotide nickel insertion protein of Clostridium acetobutylicum (strain ATCC 824 / DSM 792 / JCM 1419 / IAM 19013 / LMG 5710 / NBRC 13948 / NRRL B-527 / VKM B-1787 / 2291 / W).